A 101-amino-acid chain; its full sequence is 2-amino-4-ketopentanoate thiolase alpha subunit (101 aa).

Belongs to the OrtA family. In terms of assembly, heterodimer with OrtB.

It catalyses the reaction D-alanine + acetyl-CoA = (2R)-2-amino-4-oxopentanoate + CoA. Its function is as follows. Involved in the ornithine fermentation pathway. Catalyzes the thiolytic cleavage of 2-amino-4-ketopentanoate (AKP) with coenzyme A (CoA) to form acetyl-CoA and alanine. It is strictly specific for AKP. The protein is 2-amino-4-ketopentanoate thiolase alpha subunit of Unknown prokaryotic organism.